We begin with the raw amino-acid sequence, 441 residues long: 2-oxoisovalerate dehydrogenase subunit alpha, mitochondrial (441 aa).

A mitochondrion-targeting transit peptide spans 1 to 17; that stretch reads MISQSYRILSRISRNNE. Residue 145 to 147 participates in thiamine diphosphate binding; that stretch reads QYR. Residues Ser194, Thr199, and Gln200 each coordinate K(+).

It belongs to the BCKDHA family. In terms of assembly, heterotetramer of alpha and beta chains. It depends on thiamine diphosphate as a cofactor.

The protein resides in the mitochondrion matrix. The catalysed reaction is N(6)-[(R)-lipoyl]-L-lysyl-[protein] + 3-methyl-2-oxobutanoate + H(+) = N(6)-[(R)-S(8)-2-methylpropanoyldihydrolipoyl]-L-lysyl-[protein] + CO2. Its function is as follows. The branched-chain alpha-keto dehydrogenase complex catalyzes the overall conversion of alpha-keto acids to acyl-CoA and CO(2). It contains multiple copies of three enzymatic components: branched-chain alpha-keto acid decarboxylase (E1), lipoamide acyltransferase (E2) and lipoamide dehydrogenase (E3). The chain is 2-oxoisovalerate dehydrogenase subunit alpha, mitochondrial (bkdA) from Dictyostelium discoideum (Social amoeba).